The primary structure comprises 196 residues: GTP cyclohydrolase-2 (196 aa).

49-53 provides a ligand contact to GTP; that stretch reads RVHSE. Residues cysteine 54, cysteine 65, and cysteine 67 each contribute to the Zn(2+) site. Residues glutamine 70, 92-94, and threonine 114 contribute to the GTP site; that span reads EGR. Aspartate 126 serves as the catalytic Proton acceptor. Arginine 128 functions as the Nucleophile in the catalytic mechanism. GTP is bound by residues threonine 149 and lysine 154.

It belongs to the GTP cyclohydrolase II family. In terms of assembly, homodimer. Requires Zn(2+) as cofactor.

The enzyme catalyses GTP + 4 H2O = 2,5-diamino-6-hydroxy-4-(5-phosphoribosylamino)-pyrimidine + formate + 2 phosphate + 3 H(+). Its pathway is cofactor biosynthesis; riboflavin biosynthesis; 5-amino-6-(D-ribitylamino)uracil from GTP: step 1/4. Its function is as follows. Catalyzes the conversion of GTP to 2,5-diamino-6-ribosylamino-4(3H)-pyrimidinone 5'-phosphate (DARP), formate and pyrophosphate. This is GTP cyclohydrolase-2 from Escherichia coli O45:K1 (strain S88 / ExPEC).